Consider the following 158-residue polypeptide: uncharacterized protein (158 aa).

This is an uncharacterized protein from Methanocaldococcus jannaschii (strain ATCC 43067 / DSM 2661 / JAL-1 / JCM 10045 / NBRC 100440) (Methanococcus jannaschii).